The primary structure comprises 76 residues: cAMP-dependent protein kinase inhibitor alpha (76 aa).

At T2 the chain carries N-acetylthreonine. Residues 49 to 76 (KTEGEDDGQRSSTEQSGEAQGEAAKSES) are disordered.

It belongs to the PKI family. Present at high levels in skeletal muscle and brain but is present at lower levels in heart, testis and liver.

Its function is as follows. Extremely potent competitive inhibitor of cAMP-dependent protein kinase activity, this protein interacts with the catalytic subunit of the enzyme after the cAMP-induced dissociation of its regulatory chains. This Mus musculus (Mouse) protein is cAMP-dependent protein kinase inhibitor alpha (Pkia).